A 363-amino-acid polypeptide reads, in one-letter code: Flagellar P-ring protein (363 aa).

Residues 1–20 (MKLKLFLLSVLLLVSGSSQA) form the signal peptide.

It belongs to the FlgI family. In terms of assembly, the basal body constitutes a major portion of the flagellar organelle and consists of four rings (L,P,S, and M) mounted on a central rod.

The protein resides in the periplasm. It localises to the bacterial flagellum basal body. Its function is as follows. Assembles around the rod to form the L-ring and probably protects the motor/basal body from shearing forces during rotation. The protein is Flagellar P-ring protein of Shewanella woodyi (strain ATCC 51908 / MS32).